The sequence spans 184 residues: Ribosome-recycling factor (184 aa).

The protein belongs to the RRF family.

Its subcellular location is the cytoplasm. Its function is as follows. Responsible for the release of ribosomes from messenger RNA at the termination of protein biosynthesis. May increase the efficiency of translation by recycling ribosomes from one round of translation to another. This chain is Ribosome-recycling factor, found in Mycoplasma pneumoniae (strain ATCC 29342 / M129 / Subtype 1) (Mycoplasmoides pneumoniae).